We begin with the raw amino-acid sequence, 731 residues long: Beta-galactosidase (731 aa).

The signal sequence occupies residues 1-23; that stretch reads MGVGIQTMWSILLLFSCIFSAAS. Catalysis depends on Glu182, which acts as the Proton donor. The active-site Nucleophile is the Glu251. Asn459 is a glycosylation site (N-linked (GlcNAc...) asparagine).

This sequence belongs to the glycosyl hydrolase 35 family.

It is found in the secreted. The protein localises to the extracellular space. It localises to the apoplast. The catalysed reaction is Hydrolysis of terminal non-reducing beta-D-galactose residues in beta-D-galactosides.. Functionally, involved in cell wall degradation. Degrades polysaccharides containing beta-(1--&gt;4)-linked galactans, acting as an exo-(1--&gt;4)-beta-D-galactanase. The chain is Beta-galactosidase from Malus domestica (Apple).